The chain runs to 383 residues: Probable L-aspartate decarboxylase (383 aa).

K231 carries the N6-(pyridoxal phosphate)lysine modification.

Belongs to the group II decarboxylase family. MfnA subfamily. The cofactor is pyridoxal 5'-phosphate.

It carries out the reaction L-aspartate + H(+) = beta-alanine + CO2. It functions in the pathway cofactor biosynthesis; coenzyme A biosynthesis. Functionally, catalyzes the decarboxylation of L-aspartate to produce beta-alanine. This is Probable L-aspartate decarboxylase from Thermococcus gammatolerans (strain DSM 15229 / JCM 11827 / EJ3).